Reading from the N-terminus, the 162-residue chain is Small ribosomal subunit protein uS13 (162 aa).

The tract at residues 142–162 (RGQRTKSTGRRGSTVGVSRKK) is disordered.

It belongs to the universal ribosomal protein uS13 family. In terms of assembly, part of the 30S ribosomal subunit. Forms a loose heterodimer with protein S19. Forms two bridges to the 50S subunit in the 70S ribosome.

Its function is as follows. Located at the top of the head of the 30S subunit, it contacts several helices of the 16S rRNA. In the 70S ribosome it contacts the 23S rRNA (bridge B1a) and protein L5 of the 50S subunit (bridge B1b), connecting the 2 subunits; these bridges are implicated in subunit movement. This chain is Small ribosomal subunit protein uS13, found in Methanosarcina mazei (strain ATCC BAA-159 / DSM 3647 / Goe1 / Go1 / JCM 11833 / OCM 88) (Methanosarcina frisia).